Consider the following 705-residue polypeptide: Rab guanine nucleotide exchange factor sec2 (705 aa).

A coiled-coil region spans residues 144–285 (QTTLDDNLVA…KSVMQGMNIA (142 aa)).

Belongs to the SEC2 family.

Functionally, guanine nucleotide exchange factor that plays an important role in regulating the growth and virulence, probably by regulating the autophagy pathway. Affects the sensitivity to cell wall disruptors and the cell wall thickness by regulating the expression levels of the cell wall integrity (CWI) pathway genes, thus coordinating the growth and virulence. Positively regulates the autophagy pathway to enhance the expression of CWI pathway genes in the presence of autophagy inducers. This Aspergillus fumigatus (strain ATCC MYA-4609 / CBS 101355 / FGSC A1100 / Af293) (Neosartorya fumigata) protein is Rab guanine nucleotide exchange factor sec2.